The chain runs to 111 residues: Cell cycle protein GpsB (111 aa).

Positions 32 to 63 (LDDIMKDYDAYEAIIKELKGEIARLKAQAANS) form a coiled coil. Residues 59 to 80 (QAANSPKTTLPTEESNDVLRTE) are disordered. A compositionally biased stretch (polar residues) spans 60-71 (AANSPKTTLPTE).

The protein belongs to the GpsB family. Forms polymers through the coiled coil domains. Interacts with PBP1, MreC and EzrA.

It is found in the cytoplasm. In terms of biological role, divisome component that associates with the complex late in its assembly, after the Z-ring is formed, and is dependent on DivIC and PBP2B for its recruitment to the divisome. Together with EzrA, is a key component of the system that regulates PBP1 localization during cell cycle progression. Its main role could be the removal of PBP1 from the cell pole after pole maturation is completed. Also contributes to the recruitment of PBP1 to the division complex. Not essential for septum formation. The chain is Cell cycle protein GpsB from Streptococcus suis (strain 98HAH33).